The primary structure comprises 395 residues: Cuticlin-5 (395 aa).

Positions 1 to 18 (MNFILAVFAIILLQAVRG) are cleaved as a signal peptide. Over 19–358 (EIDNAIVGDP…ELCMTAIGTT (340 aa)) the chain is Extracellular. In terms of domain architecture, ZP spans 46–291 (SCVGNFIIKV…DYCDVPSCPD (246 aa)). N-linked (GlcNAc...) asparagine glycans are attached at residues N90 and N307. A helical transmembrane segment spans residues 359 to 379 (LLVFLNAFLFIISLVSIVHVC). At 380-395 (CFRTSPKLEKTKSTML) the chain is on the cytoplasmic side.

It is found in the cell membrane. Plays a role in alae formation in L1 and dauer stage larvae. The chain is Cuticlin-5 from Caenorhabditis elegans.